The chain runs to 341 residues: Peroxisomal membrane protein PEX14 (341 aa).

Ser2 is modified (N-acetylserine). The SH3-binding signature appears at 86–94 (PPTLPHRDW). A disordered region spans residues 276 to 341 (MQEESDKEKE…QNGQVEDSIP (66 aa)). The segment covering 279-295 (ESDKEKENGSDANKDDN) has biased composition (basic and acidic residues). The span at 308 to 341 (IDSNASIPEWQKNTAANEISVPDWQNGQVEDSIP) shows a compositional bias: polar residues. Phosphoserine is present on Ser313.

The protein belongs to the peroxin-14 family. As to quaternary structure, interacts with PEX13 (via SH3 domain); forming the PEX13-PEX14 docking complex. Interacts with PEX5 (via WxxxF/Y motifs). Interacts with PEX7. Interacts with PEX9.

It localises to the peroxisome membrane. Its function is as follows. Component of the PEX13-PEX14 docking complex, a translocon channel that specifically mediates the import of peroxisomal cargo proteins bound to PEX5 or PEX21 receptors. The PEX13-PEX14 docking complex forms a large import pore which can be opened to a diameter of about 9 nm. Mechanistically, PEX5 (or PEX21) receptor along with cargo proteins associates with the PEX14 subunit of the PEX13-PEX14 docking complex in the cytosol, leading to the insertion of the receptor into the organelle membrane with the concomitant translocation of the cargo into the peroxisome matrix. The chain is Peroxisomal membrane protein PEX14 from Saccharomyces cerevisiae (strain ATCC 204508 / S288c) (Baker's yeast).